The primary structure comprises 1704 residues: Phospholipid-transporting ATPase ABCA3 (1704 aa).

Asparagine 14 carries N-linked (GlcNAc...) asparagine glycosylation. A helical transmembrane segment spans residues 22–42 (VLVTVLELFLPLLFSGILIWL). N-linked (GlcNAc...) asparagine glycans are attached at residues asparagine 53, asparagine 124, asparagine 140, and asparagine 228. Transmembrane regions (helical) follow at residues 251 to 271 (ISDPFLIAIQYQLPLLLMLSF), 307 to 327 (AWFLMFLLFSLIVVSFMTLLF), 344 to 364 (SLVLAFLLCFAISSISFSFMV), 373 to 393 (MAATVGGFLYFFTYTPYFFVA), and 405 to 425 (LLSCLLSNVAMAMGAQLIGKF). The ABC transporter 1 domain occupies 530–763 (IKIKHLSKVF…YGAGYHMTLV (234 aa)). 566-573 (GHNGAGKT) is a binding site for ATP. N-linked (GlcNAc...) asparagine glycosylation is found at asparagine 620 and asparagine 945. The next 6 helical transmembrane spans lie at 1100–1120 (IALNLLIAMAFLASTFSILAV), 1144–1164 (SALLWDLISFLVPSLLLLVVF), 1183–1203 (LLLMLYGWAIIPLMYLLSFFF), 1213–1233 (LTIFNILSGIATFIVVTIMRI), 1245–1265 (LDHVFLVLPNHCLGMAVSNFY), and 1310–1330 (MAASGGIYLTLLFLIETNLLW). N-linked (GlcNAc...) asparagine glycosylation is present at asparagine 1350. In terms of domain architecture, ABC transporter 2 spans 1381–1614 (LIINELSKVY…FGSGYSLQAK (234 aa)). 1416–1423 (GFNGAGKT) is a binding site for ATP.

As to quaternary structure, homooligomer; disulfide-linked. In terms of processing, N-glycosylated. Localization at intracellular vesicles is accompanied by processing of oligosaccharide from high mannose type to complex type. N-linked glycosylation at Asn-124 and Asn-140 is required for stability and efficient anterograde trafficking and prevents from proteasomal degradation. Proteolytically cleaved by CTSL and to a lower extent by CTSB within multivesicular bodies (MVB) and lamellar bodies (LB) leading to a mature form of 150 kDa. In terms of tissue distribution, highly expressed in lung, moderately expressed in stomach, intestine, and kidney and weakly expressed in thyroid, brain, liver, spleen, heart, testis, and thymus.

Its subcellular location is the endosome. The protein resides in the multivesicular body membrane. It localises to the cytoplasmic vesicle membrane. It is found in the late endosome membrane. The protein localises to the lysosome membrane. It catalyses the reaction ATP + H2O + xenobioticSide 1 = ADP + phosphate + xenobioticSide 2.. The enzyme catalyses a 1,2-diacyl-sn-glycero-3-phosphocholine(in) + ATP + H2O = a 1,2-diacyl-sn-glycero-3-phosphocholine(out) + ADP + phosphate + H(+). It carries out the reaction ATP + H2O + phospholipidSide 1 = ADP + phosphate + phospholipidSide 2.. The catalysed reaction is 1,2-dihexadecanoyl-sn-glycero-3-phosphocholine(in) + ATP + H2O = 1,2-dihexadecanoyl-sn-glycero-3-phosphocholine(out) + ADP + phosphate + H(+). It catalyses the reaction cholesterol(in) + ATP + H2O = cholesterol(out) + ADP + phosphate + H(+). The enzyme catalyses a 1,2-diacyl-sn-glycero-3-phospho-(1'-sn-glycerol)(in) + ATP + H2O = a 1,2-diacyl-sn-glycero-3-phospho-(1'-sn-glycerol)(out) + ADP + phosphate + H(+). Catalyzes the ATP-dependent transport of phospholipids such as phosphatidylcholine and phosphoglycerol from the cytoplasm into the lumen side of lamellar bodies, in turn participates in the lamellar bodies biogenesis and homeostasis of pulmonary surfactant. Transports preferentially phosphatidylcholine containing short acyl chains. In addition plays a role as an efflux transporter of miltefosine across macrophage membranes and free cholesterol (FC) through intralumenal vesicles by removing FC from the cell as a component of surfactant and protects cells from free cholesterol toxicity. The polypeptide is Phospholipid-transporting ATPase ABCA3 (Rattus norvegicus (Rat)).